Here is a 459-residue protein sequence, read N- to C-terminus: 3-carboxy-cis,cis-muconate cycloisomerase (459 aa).

This sequence belongs to the class-II fumarase/aspartase family. As to quaternary structure, homotetramer.

Its subcellular location is the cytoplasm. It catalyses the reaction 2-(carboxymethyl)-5-oxo-2,5-dihydro-2-furoate = 3-carboxy-cis,cis-muconate + H(+). It participates in aromatic compound metabolism; beta-ketoadipate pathway; 5-oxo-4,5-dihydro-2-furylacetate from 3-carboxy-cis,cis-muconate: step 1/2. In terms of biological role, catalyzes an anti cycloisomerization. This Pseudomonas aeruginosa (strain ATCC 15692 / DSM 22644 / CIP 104116 / JCM 14847 / LMG 12228 / 1C / PRS 101 / PAO1) protein is 3-carboxy-cis,cis-muconate cycloisomerase (pcaB).